We begin with the raw amino-acid sequence, 96 residues long: Co-chaperonin GroES (96 aa).

This sequence belongs to the GroES chaperonin family. As to quaternary structure, heptamer of 7 subunits arranged in a ring. Interacts with the chaperonin GroEL.

It localises to the cytoplasm. Its function is as follows. Together with the chaperonin GroEL, plays an essential role in assisting protein folding. The GroEL-GroES system forms a nano-cage that allows encapsulation of the non-native substrate proteins and provides a physical environment optimized to promote and accelerate protein folding. GroES binds to the apical surface of the GroEL ring, thereby capping the opening of the GroEL channel. The protein is Co-chaperonin GroES of Polaromonas sp. (strain JS666 / ATCC BAA-500).